The sequence spans 1007 residues: MTTPISNSPSSIPTVTVSTTTASSGSLGTSTVSSTTTSTSVAQTATTTSSASTSIIQSSGENIQSTTGTPSPITSSVSTSAPSPKASATANKTSSAVSGKITSQETSEESETQATTSDGEVSSNYDDVDTPTNSSDSTVDSDYQDVETQYKTISNNGENTYETIGSHGEKNTHVQESHASGTGNPINNQQEAIRQLRSSTYTTSPRNENIFSPGPEGLPNMSLPSYSPTDKSSLLAFLSNPNTKAKMLEHSGHLVFIDTTRSSFIFVPNGNWDQVCSMKVQNGKTKEDLGLKDLEDMCAKFCTGYNKFSSDWGNRVDPLVSSKAGIESGGHLPSSVIINNKFRTCVAYGPWNPKENGPNYTPSAWRRGHRVDFGKIFDGTAPFNKINWGSSPTPGDDGISFSNETIGSEPFATPPSSPSQTPVINVNVNVGGTNVNIGDTNVSKGSGTPTSSQSVDMSTDTSDLDTSDIDTNNQTNGDINTNDNSNNVDGSLSDVDSRVEDDDGVSDTESTNGNDSGKTTSTEENGDPSGPDILAAVRKHLDTVYPGENGGSTEGPLPANQNLGNVIHDVEQNGSAKETIITPGDTGPTDSSSSVDADADVEDTSDTDSGIGDDDGVSDTESTNGNNSGKTTSTEENGDPSGPDILAAVRKHLDTVYPGENGGSTEGPLPANQNLGNVIHDVEQNGAAQETIITPGDTESTDTSSSVNANADLEDVSDADSGFGDDDGISDTESTNGNDSGKNTPVGDGGTPSGPDILAAVRKHLDTVYPGENGGSTERPLPANQNLGDIIHDVEQNGSAKETVVSPYRGGGGNTSSPIGLASLLPATPSTPLMTTPRTNGKAAASSLMIKGGETQAKLVKNGGNIPGETTLAELLPRLRGHLDKVFTSDGKFTNLNGPQLGAIIDQFRKETGSGGIIAHTDSVPGENGTASPLTGSSGEKVSLYDAAKNVTQALTSVTNKVTLAMQGQKLEGIINNNNTPSSIGQNLFAAARATTQSLSSLIGTVQ.

Residues 1-51 form the signal peptide; it reads MTTPISNSPSSIPTVTVSTTTASSGSLGTSTVSSTTTSTSVAQTATTTSSA. Residues 1 to 96 are compositionally biased toward low complexity; sequence MTTPISNSPS…SATANKTSSA (96 aa). Disordered regions lie at residues 1-186, 200-224, 387-533, 543-562, 578-645, 655-674, and 712-757; these read MTTP…GNPI, TYTT…MSLP, NWGS…GPDI, TVYP…ANQN, ETII…GPDI, and DLED…GPDI. The span at 118–163 shows a compositional bias: polar residues; sequence DGEVSSNYDDVDTPTNSSDSTVDSDYQDVETQYKTISNNGENTYET. Positions 167–176 are enriched in basic and acidic residues; that stretch reads HGEKNTHVQE. Composition is skewed to polar residues over residues 177 to 186 and 200 to 210; these read SHASGTGNPI and TYTTSPRNENI. Over residues 423-442 the composition is skewed to low complexity; that stretch reads VINVNVNVGGTNVNIGDTNV. The segment covering 443–453 has biased composition (polar residues); that stretch reads SKGSGTPTSSQ. Residues 469 to 491 show a composition bias toward low complexity; sequence IDTNNQTNGDINTNDNSNNVDGS. A compositionally biased stretch (polar residues) spans 507–523; sequence DTESTNGNDSGKTTSTE. The segment covering 597 to 618 has biased composition (acidic residues); that stretch reads ADADVEDTSDTDSGIGDDDGVS. The segment covering 619-635 has biased composition (low complexity); sequence DTESTNGNNSGKTTSTE. A compositionally biased stretch (acidic residues) spans 712–730; it reads DLEDVSDADSGFGDDDGIS. The span at 732–743 shows a compositional bias: polar residues; the sequence is TESTNGNDSGKN.

The protein belongs to the chlamydial CPn_0572/CT_456/TC_0741 family.

This is an uncharacterized protein from Chlamydia muridarum (strain MoPn / Nigg).